Here is a 154-residue protein sequence, read N- to C-terminus: Mating pheromone 2 (154 aa).

The N-terminal stretch at 1 to 16 is a signal peptide; it reads MKAIFIILAILMVTQA. Positions 17 to 52 are excised as a propeptide; it reads FKMTSKVNTKLQSQIQSKFQSKNKLASTFQTSSQLK.

The protein resides in the secreted. Functionally, mating ciliate pheromones (or gamones) are diffusible extracellular communication signals that distinguish different intraspecific classes of cells commonly referred to as 'mating types'. They prepare the latter for conjugation by changing their cell surface properties. The sequence is that of Mating pheromone 2 from Euplotoides octocarinatus (Freshwater ciliate).